The sequence spans 210 residues: Thiamine-phosphate synthase (210 aa).

4-amino-2-methyl-5-(diphosphooxymethyl)pyrimidine contacts are provided by residues 39-43 and Asn-71; that span reads QLREK. Residues Asp-72 and Asp-91 each contribute to the Mg(2+) site. 4-amino-2-methyl-5-(diphosphooxymethyl)pyrimidine is bound at residue Ser-110. 134–136 provides a ligand contact to 2-[(2R,5Z)-2-carboxy-4-methylthiazol-5(2H)-ylidene]ethyl phosphate; sequence TPT. Lys-137 is a 4-amino-2-methyl-5-(diphosphooxymethyl)pyrimidine binding site. Gly-163 provides a ligand contact to 2-[(2R,5Z)-2-carboxy-4-methylthiazol-5(2H)-ylidene]ethyl phosphate.

The protein belongs to the thiamine-phosphate synthase family. Requires Mg(2+) as cofactor.

It catalyses the reaction 2-[(2R,5Z)-2-carboxy-4-methylthiazol-5(2H)-ylidene]ethyl phosphate + 4-amino-2-methyl-5-(diphosphooxymethyl)pyrimidine + 2 H(+) = thiamine phosphate + CO2 + diphosphate. The enzyme catalyses 2-(2-carboxy-4-methylthiazol-5-yl)ethyl phosphate + 4-amino-2-methyl-5-(diphosphooxymethyl)pyrimidine + 2 H(+) = thiamine phosphate + CO2 + diphosphate. The catalysed reaction is 4-methyl-5-(2-phosphooxyethyl)-thiazole + 4-amino-2-methyl-5-(diphosphooxymethyl)pyrimidine + H(+) = thiamine phosphate + diphosphate. Its pathway is cofactor biosynthesis; thiamine diphosphate biosynthesis; thiamine phosphate from 4-amino-2-methyl-5-diphosphomethylpyrimidine and 4-methyl-5-(2-phosphoethyl)-thiazole: step 1/1. Condenses 4-methyl-5-(beta-hydroxyethyl)thiazole monophosphate (THZ-P) and 2-methyl-4-amino-5-hydroxymethyl pyrimidine pyrophosphate (HMP-PP) to form thiamine monophosphate (TMP). The polypeptide is Thiamine-phosphate synthase (Campylobacter jejuni subsp. jejuni serotype O:6 (strain 81116 / NCTC 11828)).